A 379-amino-acid chain; its full sequence is Sulfate adenylyltransferase (379 aa).

The protein belongs to the sulfate adenylyltransferase family.

The enzyme catalyses sulfate + ATP + H(+) = adenosine 5'-phosphosulfate + diphosphate. It functions in the pathway sulfur metabolism; hydrogen sulfide biosynthesis; sulfite from sulfate: step 1/3. The sequence is that of Sulfate adenylyltransferase from Thermococcus onnurineus (strain NA1).